The primary structure comprises 207 residues: Large ribosomal subunit protein uL4 (207 aa).

Residues 49-78 form a disordered region; it reads HAVKNRSAVSGGGRKPWRQKGTGRARQGSI.

This sequence belongs to the universal ribosomal protein uL4 family. As to quaternary structure, part of the 50S ribosomal subunit.

One of the primary rRNA binding proteins, this protein initially binds near the 5'-end of the 23S rRNA. It is important during the early stages of 50S assembly. It makes multiple contacts with different domains of the 23S rRNA in the assembled 50S subunit and ribosome. Functionally, forms part of the polypeptide exit tunnel. The sequence is that of Large ribosomal subunit protein uL4 from Streptococcus agalactiae serotype Ia (strain ATCC 27591 / A909 / CDC SS700).